Consider the following 84-residue polypeptide: Small ribosomal subunit protein bS20 (84 aa).

The protein belongs to the bacterial ribosomal protein bS20 family.

Functionally, binds directly to 16S ribosomal RNA. The protein is Small ribosomal subunit protein bS20 of Bacteroides thetaiotaomicron (strain ATCC 29148 / DSM 2079 / JCM 5827 / CCUG 10774 / NCTC 10582 / VPI-5482 / E50).